The sequence spans 40 residues: Photosystem II reaction center protein J (40 aa).

A helical membrane pass occupies residues Ile8 to Phe28.

The protein belongs to the PsbJ family. PSII is composed of 1 copy each of membrane proteins PsbA, PsbB, PsbC, PsbD, PsbE, PsbF, PsbH, PsbI, PsbJ, PsbK, PsbL, PsbM, PsbT, PsbX, PsbY, PsbZ, Psb30/Ycf12, at least 3 peripheral proteins of the oxygen-evolving complex and a large number of cofactors. It forms dimeric complexes.

The protein localises to the plastid. Its subcellular location is the chloroplast thylakoid membrane. Functionally, one of the components of the core complex of photosystem II (PSII). PSII is a light-driven water:plastoquinone oxidoreductase that uses light energy to abstract electrons from H(2)O, generating O(2) and a proton gradient subsequently used for ATP formation. It consists of a core antenna complex that captures photons, and an electron transfer chain that converts photonic excitation into a charge separation. This Oenothera elata subsp. hookeri (Hooker's evening primrose) protein is Photosystem II reaction center protein J.